Here is a 1788-residue protein sequence, read N- to C-terminus: Genome polyprotein (1788 aa).

An interaction with host MAP1LC3A/LC3 region spans residues Met1–Arg184. The span at Gly58–Ala68 shows a compositional bias: low complexity. The tract at residues Gly58–Val86 is disordered. Residues Gln74–Glu84 are compositionally biased toward basic and acidic residues. An interaction with NTPase region spans residues Asn185–Gln399. The segment at His302–Gln399 is interaction with NS4. 2 host ER membrane association regions span residues Lys319–Asn350 and Thr361–Gln399. The segment at Gly400–Ala575 is interaction with NS1-2 and NS4 and homooligomerization. Positions Arg533–Asp698 constitute an SF3 helicase domain. Residue Gly561–Thr568 participates in ATP binding. The important for mitochondrion targeting stretch occupies residues Ala652 to Asp757. Residues Tyr827–Gly833 are functions as endoplasmic reticulum export signal. Residues Arg866–Pro911 are host membrane association. Residues Glu948 to Asn979 are disordered. Basic residues predominate over residues Lys965–Arg975. The acidic stretch occupies residues Asp988–Glu993. Residue Tyr991 is modified to O-(5'-phospho-RNA)-tyrosine. The interval Trp1083–Glu1099 is interaction with host EIF4G. One can recognise a Peptidase C37 domain in the interval Ala1100 to Glu1280. Residues His1129, Glu1153, and Cys1238 each act as for 3CLpro activity in the active site. The region spanning Lys1515–Lys1636 is the RdRp catalytic domain. Residues Asp1519, Asp1521, Asp1623, and Glu1624 each coordinate Mg(2+).

In terms of assembly, homodimer. Homooligomer. Interacts with NTPase; this interaction increases the proapoptotic activity of the NTPase and is crucial for the formation of the viral replication complex. Interacts with NS4; this interaction is crucial for the formation of the viral replication complex. Interacts (via N-terminus) with host VAPA. Interacts with host MAP1LC3A/LC3; this interaction does not seem to be linked to host autophagy, but rather plays a role in the formation of viral factories. As to quaternary structure, homooligomer. Interacts with NS1-2; this interaction increases the proapoptotic activity of the NTPase and is crucial for the formation of the viral replication complex. Interacts with NS4; this interaction increases the proapoptotic activity of the NTPase. Homodimer. Monomer; in solution. In terms of assembly, interacts with NTPase; this interaction increases the proapoptotic activity of the NTPase. Interacts with NS1-2; this interaction is crucial for the formation of the viral replication complex. As to quaternary structure, monomer. Interacts with the RNA-directed RNA polymerase; this interaction induces the multimerization of the RdRp and enhances its activity. Interacts with host IEF4G1; this interaction plays a role in translation of viral proteins. Homohexamer; also forms fibrous hexameric oligomer. Interacts with the viral genome-linked protein; this interaction induces the multimerization of the RdRp and enhances its activity. It depends on Mg(2+) as a cofactor. Requires Mn(2+) as cofactor. Specific enzymatic cleavages in vivo yield mature proteins. 3CLpro is first autocatalytically cleaved, then processes the whole polyprotein. NS1/2-3 and NS3-4 sites are cleaved rapidly and NS4-5, NS5-6, and NS6-7 sites are processed subsequently and less efficiently. Post-translationally, VPg is uridylylated by the polymerase and is covalently attached to the 5'-end of the polyadenylated genomic and subgenomic RNAs. This uridylylated form acts as a nucleotide-peptide primer for the polymerase.

The protein localises to the host Golgi apparatus membrane. It is found in the host endoplasmic reticulum membrane. The catalysed reaction is a ribonucleoside 5'-triphosphate + H2O = a ribonucleoside 5'-diphosphate + phosphate + H(+). The enzyme catalyses Endopeptidase with a preference for cleavage when the P1 position is occupied by Glu-|-Xaa and the P1' position is occupied by Gly-|-Yaa.. It catalyses the reaction RNA(n) + a ribonucleoside 5'-triphosphate = RNA(n+1) + diphosphate. Functionally, induces the proliferation of the host smooth ER membranes forming long tubular structures. These remodeled membranes probably form the viral factories that contain the replication complex. May play a role in viral replication by interacting with host VAPA, a vesicle-associated membrane protein that plays a role in SNARE-mediated vesicle fusion. This interaction may target replication complex to intracellular membranes. Displays NTPase activity, but no helicase activity. Induces the formation of convoluted membranes derived from the host ER. These remodeled membranes probably form the viral factories that contain the replication complex. Initiates host cell death by targeting the mitochondrial outer membrane, leading to the permeabilization of mitochondria, programmed host cell death and viral egress. Probably plays a role in preventing the assembly of host stress granules. In terms of biological role, probable key protein responsible for the formation of membrane alterations by the virus. Induces the formation of convoluted membranes derived from the host ER. These remodeled membranes probably form the viral factories that contain the replication complex. May play a role in targeting replication complex to intracellular membranes. Its function is as follows. Viral genome-linked protein is covalently linked to the 5'-end of the positive-strand, negative-strand genomic RNAs and subgenomic RNA. Acts as a genome-linked replication primer. May recruit ribosome to viral RNA thereby promoting viral proteins translation. Interacts with host translation initiation complex to allow the translation of viral proteins. Induces the formation of aggregates of RNA-directed RNA polymerase in the presence of RNA. Through its interaction with the viral RNA-directed RNA polymerase, plays a crucial role in enhancing the polymerase activity. Functionally, processes the polyprotein. 3CLpro-RdRp is first released by autocleavage, then all other proteins are cleaved. May cleave polyadenylate-binding protein thereby inhibiting cellular translation. Replicates genomic and antigenomic RNA by recognizing replications specific signals. Also transcribes a subgenomic mRNA by initiating RNA synthesis internally on antigenomic RNA. This sgRNA codes for structural proteins. Catalyzes the covalent attachment VPg with viral RNAs. This chain is Genome polyprotein, found in Southampton virus (strain GI/Human/United Kingdom/Southampton/1991) (SHV).